The sequence spans 73 residues: U3-agatoxin-Ao1i (73 aa).

Positions 1-20 (MRTIISLLLLSAMVFAEIEA) are cleaved as a signal peptide. A propeptide spanning residues 21 to 34 (ISLEEGLQLFEGER) is cleaved from the precursor. Intrachain disulfides connect cysteine 36-cysteine 52, cysteine 43-cysteine 57, cysteine 51-cysteine 67, and cysteine 59-cysteine 65. Serine 71 is modified (serine amide).

This sequence belongs to the neurotoxin 07 (Beta/delta-agtx) family. 03 (aga-4) subfamily. Aga sub-subfamily. In terms of tissue distribution, expressed by the venom gland.

It is found in the secreted. Functionally, insecticidal neurotoxin that induces an irreversible spastic paralysis when injected into insects. Modifies presynaptic voltage-gated sodium channels (Nav), causing them to open at the normal resting potential of the nerve. This leads to spontaneous release of neurotransmitter and repetitive action potentials in motor neurons. The chain is U3-agatoxin-Ao1i from Agelena orientalis (Funnel-web spider).